Reading from the N-terminus, the 228-residue chain is Cytochrome b6-f complex iron-sulfur subunit 1, chloroplastic (228 aa).

The transit peptide at 1-49 (MASSTLSPVTQLCSSKSGLSSVSQCLLVKPMKINSHGLGKDKRMKVKCM) directs the protein to the chloroplast. Residues 72–92 (LLGALSLPTAGMLVPYGTFFV) traverse the membrane as a helical segment. In terms of domain architecture, Rieske spans 115–211 (ASEWLKTHPP…ADIDDGKVVF (97 aa)). The [2Fe-2S] cluster site is built by Cys-157, His-159, Cys-175, and His-178. Residues Cys-162 and Cys-177 are joined by a disulfide bond.

Belongs to the Rieske iron-sulfur protein family. As to quaternary structure, the 4 large subunits of the cytochrome b6-f complex are cytochrome b6, subunit IV (17 kDa polypeptide, petD), cytochrome f and the Rieske protein, while the 4 small subunits are petG, petL, petM and petN. The complex functions as a dimer. [2Fe-2S] cluster serves as cofactor.

The protein resides in the plastid. Its subcellular location is the chloroplast thylakoid membrane. It carries out the reaction 2 oxidized [plastocyanin] + a plastoquinol + 2 H(+)(in) = 2 reduced [plastocyanin] + a plastoquinone + 4 H(+)(out). Functionally, component of the cytochrome b6-f complex, which mediates electron transfer between photosystem II (PSII) and photosystem I (PSI), cyclic electron flow around PSI, and state transitions. The chain is Cytochrome b6-f complex iron-sulfur subunit 1, chloroplastic (petC1) from Nicotiana tabacum (Common tobacco).